Consider the following 96-residue polypeptide: Toxin ParE1 (96 aa).

It belongs to the RelE toxin family. As to quaternary structure, forms a ParD1(2)-ParE1(2) heterotetramer.

Functionally, toxic component of a type II toxin-antitoxin (TA) system. Its toxic effect is neutralized by coexpression with cognate antitoxin ParD1 but no other ParD or RelB antitoxin. Low levels of wild-type toxin in the absence of antitoxin decreases the rate of cell growth, and results in death or loss of colony formation abilities and greatly elongated cells. Low levels of a mutant missing the last 4 residues leads to loss of cell division while cell elongation continues. The sequence is that of Toxin ParE1 (parE1) from Caulobacter vibrioides (strain ATCC 19089 / CIP 103742 / CB 15) (Caulobacter crescentus).